Consider the following 538-residue polypeptide: Syncytin-2 (538 aa).

Positions 1-15 (MGLLLLVLILTPSLA) are cleaved as a signal peptide. The Extracellular portion of the chain corresponds to 16 to 478 (AYRHPDFPLL…GWLNWEGTWK (463 aa)). Residues 43–46 (CWLC) carry the CXXC motif. 3 disulfides stabilise this stretch: Cys43–Cys46, Cys43–Cys439, and Cys431–Cys438. Asn133, Asn146, Asn177, Asn220, Asn241, Asn247, Asn312, and Asn332 each carry an N-linked (GlcNAc...) asparagine glycan. A fusion peptide region spans residues 354-374 (FIPLLAGLGILAGTGTGIAGI). Positions 414–430 (LQNRRGLDMLTAAQGGI) match the CKS-17 motif. The CX6CC signature appears at 431 to 439 (CLALDEKCC). Asn443 is a glycosylation site (N-linked (GlcNAc...) asparagine). A helical membrane pass occupies residues 479–499 (WFSWVLPLTGPLVSLLLLLLF). Over 500 to 538 (GPCLLNLITQFVSSRLQAIKLQTNLSAGRHPRNIQESPF) the chain is Cytoplasmic.

This sequence belongs to the gamma type-C retroviral envelope protein family. HERV class-I FRD env subfamily. The surface and transmembrane proteins form a heterodimer. They are attached by non-covalent interactions or by a labile interchain disulfide bond. In terms of processing, specific enzymatic cleavages in vivo yield the mature SU and TM proteins. Post-translationally, the CXXC motif is highly conserved across a broad range of retroviral envelope proteins. It is thought to participate in the formation of a labile disulfide bond possibly with the CX6CC motif present in the transmembrane protein.

The protein localises to the virion. Its subcellular location is the cell membrane. In terms of biological role, this endogenous retroviral envelope protein has retained its original fusogenic properties and participates in trophoblast fusion and the formation of a syncytium during placenta morphogenesis. The interaction with MFSD2A is apparently important for this process. Functionally, endogenous envelope proteins may have kept, lost or modified their original function during evolution but this one can still make pseudotypes with MLV, HIV-1 or SIV-1 virions and confer infectivity. Retroviral envelope proteins mediate receptor recognition and membrane fusion during early infection. The surface protein mediates receptor recognition, while the transmembrane protein anchors the envelope heterodimer to the viral membrane through one transmembrane domain. The other hydrophobic domain, called fusion peptide, mediates fusion of the viral membrane with the target cell membrane. The chain is Syncytin-2 (ERVFRD-1) from Pan troglodytes (Chimpanzee).